Reading from the N-terminus, the 382-residue chain is Chaperone protein DnaJ (382 aa).

The region spanning 5–70 is the J domain; that stretch reads DYYEVLGVSR…DKKAAYDRYG (66 aa). The CR-type zinc finger occupies 141–219; sequence GVQKTINVPA…CHGAGRVEKE (79 aa). Zn(2+) contacts are provided by cysteine 154, cysteine 157, cysteine 171, cysteine 174, cysteine 193, cysteine 196, cysteine 207, and cysteine 210. 4 CXXCXGXG motif repeats span residues 154-161, 171-178, 193-200, and 207-214; these read CDACKGTG, CPTCSGMG, CPTCNGMG, and CKVCHGAG.

The protein belongs to the DnaJ family. In terms of assembly, homodimer. It depends on Zn(2+) as a cofactor.

It localises to the cytoplasm. Participates actively in the response to hyperosmotic and heat shock by preventing the aggregation of stress-denatured proteins and by disaggregating proteins, also in an autonomous, DnaK-independent fashion. Unfolded proteins bind initially to DnaJ; upon interaction with the DnaJ-bound protein, DnaK hydrolyzes its bound ATP, resulting in the formation of a stable complex. GrpE releases ADP from DnaK; ATP binding to DnaK triggers the release of the substrate protein, thus completing the reaction cycle. Several rounds of ATP-dependent interactions between DnaJ, DnaK and GrpE are required for fully efficient folding. Also involved, together with DnaK and GrpE, in the DNA replication of plasmids through activation of initiation proteins. The polypeptide is Chaperone protein DnaJ (Cereibacter sphaeroides (strain ATCC 17023 / DSM 158 / JCM 6121 / CCUG 31486 / LMG 2827 / NBRC 12203 / NCIMB 8253 / ATH 2.4.1.) (Rhodobacter sphaeroides)).